Consider the following 294-residue polypeptide: tRNA pseudouridine synthase B (294 aa).

D39 functions as the Nucleophile in the catalytic mechanism.

It belongs to the pseudouridine synthase TruB family. Type 1 subfamily.

The catalysed reaction is uridine(55) in tRNA = pseudouridine(55) in tRNA. Responsible for synthesis of pseudouridine from uracil-55 in the psi GC loop of transfer RNAs. In Streptococcus pyogenes serotype M2 (strain MGAS10270), this protein is tRNA pseudouridine synthase B.